The chain runs to 32 residues: VIGGDECDINEHRFLVFLTXASGLACGGTLIN.

The Peptidase S1 domain maps to 1 to 32 (VIGGDECDINEHRFLVFLTXASGLACGGTLIN).

This sequence belongs to the peptidase S1 family. Snake venom subfamily. As to quaternary structure, monomer. Contains 6 disulfide bonds. In terms of processing, glycosylated. As to expression, expressed by the venom gland.

It localises to the secreted. Functionally, cleaves a kininogen analog with the release of kallidin (lysyl-bradykinin). Completely cleaves fibrinogen Aalpha chain, partially cleaves Bbeta chain and has no activity on gamma chain. The chain is Snake venom serine proteinase from Bitis arietans (African puff adder).